The following is a 79-amino-acid chain: Cell division protein ZapB (79 aa).

Residues 6 to 78 (FEKLEVKVQQ…LRALLGKMEE (73 aa)) are a coiled coil.

It belongs to the ZapB family. In terms of assembly, homodimer. The ends of the coiled-coil dimer bind to each other, forming polymers. Interacts with FtsZ.

The protein resides in the cytoplasm. Non-essential, abundant cell division factor that is required for proper Z-ring formation. It is recruited early to the divisome by direct interaction with FtsZ, stimulating Z-ring assembly and thereby promoting cell division earlier in the cell cycle. Its recruitment to the Z-ring requires functional FtsA or ZipA. This chain is Cell division protein ZapB, found in Yersinia enterocolitica serotype O:8 / biotype 1B (strain NCTC 13174 / 8081).